Reading from the N-terminus, the 588-residue chain is Protein gamma response 1 (588 aa).

Coiled-coil stretches lie at residues 64 to 104 (AACD…LGKT) and 164 to 281 (SEVK…KTVV). Composition is skewed to basic and acidic residues over residues 377–389 (KHSE…DKVR), 465–484 (NVKR…KKDD), and 508–525 (TSKK…KAER). Disordered stretches follow at residues 377-398 (KHSE…SGNN) and 417-525 (PIVR…KAER).

In terms of tissue distribution, basal levels in mitotically dividing cells (meristems), and high levels in endoreduplicating cells (stipules, trichomes) (at protein level).

It is found in the nucleus. Functionally, seems to mediate cell cycle arrest before mitosis in response to DNA damage. Is probably also involved in the transition from mitosis to endoreduplication. This chain is Protein gamma response 1 (GR1), found in Arabidopsis thaliana (Mouse-ear cress).